A 311-amino-acid polypeptide reads, in one-letter code: Olfactory receptor 10G9 (311 aa).

Topologically, residues 1–23 (MSKTSLVTAFILTGLPHAPGLDA) are extracellular. The chain crosses the membrane as a helical span at residues 24-44 (PLFGIFLVVYVLTVLGNLLIL). Residues 45–52 (LVIRVDSH) are Cytoplasmic-facing. Residues 53 to 73 (LHTPMYYFLTNLSFIDMWFST) traverse the membrane as a helical segment. At 74-98 (VTVPKMLMTLVSPSGRAISFHSCVA) the chain is on the extracellular side. A disulfide bond links C96 and C188. A helical membrane pass occupies residues 99–119 (QLYFFHFLGSTECFLYTVMSY). The Cytoplasmic segment spans residues 120–138 (DRYLAISYPLRYTSMMSGS). Residues 139-159 (RCALLATSTWLSGSLHSAVQT) traverse the membrane as a helical segment. Topologically, residues 160-196 (ILTFHLPYCGPNQIQHYLCDAPPILKLACADTSANEM) are extracellular. Residues 197-216 (VIFVDIGLVASGCFLLIVLS) form a helical membrane-spanning segment. The Cytoplasmic portion of the chain corresponds to 217-236 (YVSIVCSILRIHTSEGRHRA). The helical transmembrane segment at 237–257 (FQTCASHCIVVLCFFVPCVFI) threads the bilayer. Residues 258 to 268 (YLRPGSRDVVD) lie on the Extracellular side of the membrane. A helical membrane pass occupies residues 269–289 (GVVAIFYTVLTPLLNPVVYTL). Residues 290-311 (RNKEVKKAVLKLRDKVAHSQGE) lie on the Cytoplasmic side of the membrane.

It belongs to the G-protein coupled receptor 1 family.

Its subcellular location is the cell membrane. Odorant receptor. The protein is Olfactory receptor 10G9 (OR10G9) of Homo sapiens (Human).